The primary structure comprises 60 residues: Large ribosomal subunit protein uL30 (60 aa).

Belongs to the universal ribosomal protein uL30 family. In terms of assembly, part of the 50S ribosomal subunit.

In Burkholderia ambifaria (strain MC40-6), this protein is Large ribosomal subunit protein uL30.